A 418-amino-acid chain; its full sequence is MYKKIKLRDQQISELINLESKRQNSQIELIASENYASEDVILANGTSLSNKYGEGYPGKRYYGGCTFIDQIEKIAIERVKKLFKIEYANVQPYSGSSANAAVFAALLKPGDKILGLDLNAGGHLSHGYKINFSGMFYSGISYFLDENELLDYEAIEKIALKTKPNLIICGYSAYSRKIDFARFRQIADKVNAFLLADIAHIAGLIAAGQHPSPVGYAHIITSTTQKTLRGPRGGLILTSSKEIAAKIDKVVFPGIQGGPFFHTIAAKAVAFKEALEPWFKEYCAQIVKNAAHFASEFIKKGIRIVSQGTENHLFTIDVLSSYNLNGKQAQILLESVNIITNKNTIPNDTLSPFVTSGLRLGTPAMTSRGFKEQEFSQMAEIIDFVLRKKELNALEIKEIKKKVKILTKNFPIKKSYWP.

(6S)-5,6,7,8-tetrahydrofolate-binding positions include Leu-118 and 122–124; that span reads GHL. Lys-226 carries the N6-(pyridoxal phosphate)lysine modification. 351 to 353 lines the (6S)-5,6,7,8-tetrahydrofolate pocket; sequence SPF.

The protein belongs to the SHMT family. As to quaternary structure, homodimer. Pyridoxal 5'-phosphate serves as cofactor.

It localises to the cytoplasm. It catalyses the reaction (6R)-5,10-methylene-5,6,7,8-tetrahydrofolate + glycine + H2O = (6S)-5,6,7,8-tetrahydrofolate + L-serine. It participates in one-carbon metabolism; tetrahydrofolate interconversion. Its function is as follows. Catalyzes the reversible interconversion of serine and glycine with tetrahydrofolate (THF) serving as the one-carbon carrier. This reaction serves as the major source of one-carbon groups required for the biosynthesis of purines, thymidylate, methionine, and other important biomolecules. The polypeptide is Probable serine hydroxymethyltransferase (Mesomycoplasma hyopneumoniae (strain 7448) (Mycoplasma hyopneumoniae)).